The following is a 408-amino-acid chain: Gustatory receptor 10a (408 aa).

At 1 to 20 (MTSPDERKSFWERHEFKFYR) the chain is on the cytoplasmic side. The chain crosses the membrane as a helical span at residues 21-38 (YGHVYALIYGQVVIDYVP). The Extracellular portion of the chain corresponds to 39–48 (QRALKRGVKV). A helical membrane pass occupies residues 49-69 (LLIAYGHLFSMLLIVVLPGYF). Residues 70–86 (CYHFRTLTDTLDRRLQL) lie on the Cytoplasmic side of the membrane. The chain crosses the membrane as a helical span at residues 87–107 (LFYVSFTNTAIKYATVIVTYV). Residues 108–144 (ANTVHFEAINQRCTMQRTHLEFEFKNAPQEPKRPFEF) lie on the Extracellular side of the membrane. A helical membrane pass occupies residues 145–165 (FMYFKFCLINLMMMIQVCGIF). Over 166 to 270 (AQYGEVGKGS…RESFRMHQFQ (105 aa)) the chain is Cytoplasmic. A helical membrane pass occupies residues 271 to 291 (LIGLMLSTLINNLTNFYTLFH). Residues 292–304 (MLAKQSLEEVSYP) are Extracellular-facing. The helical transmembrane segment at 305–325 (VVVGSVYATGFYIDTYIVALI) threads the bilayer. At 326-381 (NEHIKLELEAVALTMRRFAEPREMDERLTREIEHLSLELLNYQPPMLCGLLHLDRR) the chain is on the cytoplasmic side. Residues 382–402 (LVYLIAVTAFSYFITLVQFDL) traverse the membrane as a helical segment. Residues 403-408 (YLRKKS) are Extracellular-facing.

It belongs to the insect chemoreceptor superfamily. Gustatory receptor (GR) family. Gr10a subfamily. As to expression, expressed in the medial aspect of the third antennal segment, and in neurons of the terminal external chemosensory organ of larvae.

The protein resides in the cell membrane. In terms of biological role, probable gustatory receptor which mediates acceptance or avoidance behavior, depending on its substrates. The polypeptide is Gustatory receptor 10a (Gr10a) (Drosophila melanogaster (Fruit fly)).